The chain runs to 542 residues: CTP synthase (542 aa).

Positions 1–265 are amidoligase domain; sequence MARYVFITGG…DSEVLCAFGI (265 aa). S13 is a CTP binding site. S13 is a UTP binding site. 14–19 serves as a coordination point for ATP; the sequence is SLGKGI. Y54 lines the L-glutamine pocket. D71 provides a ligand contact to ATP. The Mg(2+) site is built by D71 and E139. Residues 146–148, 186–191, and K222 contribute to the CTP site; these read DIE and KTKPTQ. Residues 186-191 and K222 contribute to the UTP site; that span reads KTKPTQ. In terms of domain architecture, Glutamine amidotransferase type-1 spans 291–541; sequence TIAVVGKYTG…IEAAVEQSRL (251 aa). A353 contributes to the L-glutamine binding site. C380 serves as the catalytic Nucleophile; for glutamine hydrolysis. L-glutamine is bound by residues 381 to 384, E404, and R469; that span reads FGMQ. Residues H514 and E516 contribute to the active site.

It belongs to the CTP synthase family. In terms of assembly, homotetramer.

The enzyme catalyses UTP + L-glutamine + ATP + H2O = CTP + L-glutamate + ADP + phosphate + 2 H(+). It catalyses the reaction L-glutamine + H2O = L-glutamate + NH4(+). It carries out the reaction UTP + NH4(+) + ATP = CTP + ADP + phosphate + 2 H(+). It participates in pyrimidine metabolism; CTP biosynthesis via de novo pathway; CTP from UDP: step 2/2. Allosterically activated by GTP, when glutamine is the substrate; GTP has no effect on the reaction when ammonia is the substrate. The allosteric effector GTP functions by stabilizing the protein conformation that binds the tetrahedral intermediate(s) formed during glutamine hydrolysis. Inhibited by the product CTP, via allosteric rather than competitive inhibition. Its function is as follows. Catalyzes the ATP-dependent amination of UTP to CTP with either L-glutamine or ammonia as the source of nitrogen. Regulates intracellular CTP levels through interactions with the four ribonucleotide triphosphates. The polypeptide is CTP synthase (Bartonella tribocorum (strain CIP 105476 / IBS 506)).